The sequence spans 71 residues: UPF0434 protein APH_0052 (71 aa).

The segment covering 52 to 63 (RKLQPEEPKEGS) has biased composition (basic and acidic residues). Residues 52–71 (RKLQPEEPKEGSELQSSDNQ) form a disordered region.

The protein belongs to the UPF0434 family.

In Anaplasma phagocytophilum (strain HZ), this protein is UPF0434 protein APH_0052.